A 424-amino-acid chain; its full sequence is ATP-citrate synthase alpha chain protein 3 (424 aa).

The citrate site is built by Asn-343, Thr-345, and Arg-376.

The protein belongs to the succinate/malate CoA ligase beta subunit family. In terms of assembly, heterooctamer of 4 alpha and 4 beta chains.

Its subcellular location is the cytoplasm. It is found in the cytosol. The catalysed reaction is oxaloacetate + acetyl-CoA + ADP + phosphate = citrate + ATP + CoA. Its function is as follows. ATP citrate-lyase is the primary enzyme responsible for the synthesis of cytosolic acetyl-CoA, used for the elongation of fatty acids and biosynthesis of isoprenoids, flavonoids and malonated derivatives. May supply substrate to the cytosolic acetyl-CoA carboxylase, which generates the malonyl-CoA used for the synthesis of a multitude of compounds, including very long chain fatty acids and flavonoids. Required for normal growth and development and elongation of C18 fatty acids to C20 to C24 fatty acids in seeds. In contrast to all known animal ACL enzymes having a homomeric structure, plant ACLs are composed of alpha and beta chains. This Arabidopsis thaliana (Mouse-ear cress) protein is ATP-citrate synthase alpha chain protein 3 (ACLA-3).